A 141-amino-acid chain; its full sequence is uncharacterized protein (141 aa).

This is an uncharacterized protein from Methanocaldococcus jannaschii (strain ATCC 43067 / DSM 2661 / JAL-1 / JCM 10045 / NBRC 100440) (Methanococcus jannaschii).